The sequence spans 81 residues: Small ribosomal subunit protein bS16 (81 aa).

This sequence belongs to the bacterial ribosomal protein bS16 family.

This is Small ribosomal subunit protein bS16 from Neisseria gonorrhoeae (strain ATCC 700825 / FA 1090).